Here is a 316-residue protein sequence, read N- to C-terminus: Acetyl-coenzyme A carboxylase carboxyl transferase subunit alpha (316 aa).

Residues 36–290 form the CoA carboxyltransferase C-terminal domain; sequence PLRTQLETLR…GSVISRHLDD (255 aa).

It belongs to the AccA family. In terms of assembly, acetyl-CoA carboxylase is a heterohexamer composed of biotin carboxyl carrier protein (AccB), biotin carboxylase (AccC) and two subunits each of ACCase subunit alpha (AccA) and ACCase subunit beta (AccD).

It is found in the cytoplasm. It carries out the reaction N(6)-carboxybiotinyl-L-lysyl-[protein] + acetyl-CoA = N(6)-biotinyl-L-lysyl-[protein] + malonyl-CoA. The protein operates within lipid metabolism; malonyl-CoA biosynthesis; malonyl-CoA from acetyl-CoA: step 1/1. Component of the acetyl coenzyme A carboxylase (ACC) complex. First, biotin carboxylase catalyzes the carboxylation of biotin on its carrier protein (BCCP) and then the CO(2) group is transferred by the carboxyltransferase to acetyl-CoA to form malonyl-CoA. The sequence is that of Acetyl-coenzyme A carboxylase carboxyl transferase subunit alpha from Deinococcus radiodurans (strain ATCC 13939 / DSM 20539 / JCM 16871 / CCUG 27074 / LMG 4051 / NBRC 15346 / NCIMB 9279 / VKM B-1422 / R1).